We begin with the raw amino-acid sequence, 337 residues long: Glyceraldehyde-3-phosphate dehydrogenase (337 aa).

NADP(+) contacts are provided by residues 11 to 12 (TV), 34 to 35 (TR), and Gly110. Position 139-141 (139-141 (SCN)) interacts with D-glyceraldehyde 3-phosphate. Cys140 (nucleophile) is an active-site residue. Residue Asp171 coordinates NADP(+). D-glyceraldehyde 3-phosphate is bound at residue 194–195 (HG). Residue Gln300 participates in NADP(+) binding.

The protein belongs to the glyceraldehyde-3-phosphate dehydrogenase family. As to quaternary structure, homotetramer.

Its subcellular location is the cytoplasm. It carries out the reaction D-glyceraldehyde 3-phosphate + phosphate + NADP(+) = (2R)-3-phospho-glyceroyl phosphate + NADPH + H(+). It catalyses the reaction D-glyceraldehyde 3-phosphate + phosphate + NAD(+) = (2R)-3-phospho-glyceroyl phosphate + NADH + H(+). It functions in the pathway carbohydrate degradation; glycolysis; pyruvate from D-glyceraldehyde 3-phosphate: step 1/5. In terms of biological role, exhibits a dual-cofactor specificity, with a marked preference for NADP(+) over NAD(+). The protein is Glyceraldehyde-3-phosphate dehydrogenase (gap) of Methanothermus fervidus.